Here is a 1836-residue protein sequence, read N- to C-terminus: Sodium channel protein type 4 subunit alpha (1836 aa).

At Met-1–Ala-131 the chain is on the cytoplasmic side. Over residues Leu-39–Ala-60 the composition is skewed to basic and acidic residues. Residues Leu-39–Asn-63 are disordered. Residues Leu-113–Asn-454 form an I repeat. A helical transmembrane segment spans residues Leu-132 to Met-150. Residues Ser-151 to Ser-157 lie on the Extracellular side of the membrane. The helical transmembrane segment at Lys-158–Ala-178 threads the bilayer. Residues Arg-179–Pro-192 lie on the Cytoplasmic side of the membrane. Residues Trp-193–Val-210 traverse the membrane as a helical segment. The Extracellular segment spans residues Asp-211–Ser-216. A glycan (N-linked (GlcNAc...) asparagine) is linked at Asn-214. A helical membrane pass occupies residues Ala-217–Ile-233. The Cytoplasmic segment spans residues Pro-234 to Asp-252. The helical transmembrane segment at Val-253–Phe-272 threads the bilayer. The Extracellular segment spans residues Met-273–Thr-391. A disulfide bridge links Cys-280 with Cys-360. N-linked (GlcNAc...) asparagine glycans are attached at residues Asn-288, Asn-291, Asn-297, Asn-303, Asn-315, Asn-321, Asn-333, and Asn-362. Cys-369 and Cys-375 are oxidised to a cystine. The pore-forming intramembrane region spans Phe-392–Leu-416. Over Arg-417–Tyr-423 the chain is Extracellular. The helical transmembrane segment at Met-424 to Ala-444 threads the bilayer. Residues Val-445–Pro-578 lie on the Cytoplasmic side of the membrane. The disordered stretch occupies residues Gly-493–Ile-530. Residues Ser-509–Ser-528 are compositionally biased toward polar residues. The stretch at Cys-560 to Gly-832 is one II repeat. The chain crosses the membrane as a helical span at residues Phe-579 to Met-597. The Extracellular segment spans residues Glu-598–Asn-608. The helical transmembrane segment at Val-609–Lys-628 threads the bilayer. Topologically, residues Leu-629 to Trp-642 are cytoplasmic. Residues Asn-643–Val-662 form a helical membrane-spanning segment. At Gln-663–Gly-664 the chain is on the extracellular side. The chain crosses the membrane as a helical span at residues Leu-665–Ser-682. Residues Trp-683–Gly-698 are Cytoplasmic-facing. Residues Ala-699–Val-717 traverse the membrane as a helical segment. Residues Gly-718–Asp-746 lie on the Extracellular side of the membrane. Cys-731 and Cys-737 are joined by a disulfide. The segment at residues Phe-747–Trp-767 is an intramembrane region (pore-forming). Residues Asp-768–Cys-778 are Extracellular-facing. The cysteines at positions 769 and 778 are disulfide-linked. The chain crosses the membrane as a helical span at residues Leu-779 to Phe-797. Over Leu-798–Trp-1032 the chain is Cytoplasmic. 2 disordered regions span residues Gly-863 to Glu-885 and Glu-930 to Glu-992. Over residues Glu-876–Glu-885 the composition is skewed to basic and acidic residues. 2 stretches are compositionally biased toward acidic residues: residues Glu-930–Pro-947 and Glu-975–Glu-992. One copy of the III repeat lies at Arg-1013–Leu-1326. The helical transmembrane segment at Phe-1033–Phe-1050 threads the bilayer. Residues Glu-1051 to Thr-1063 are Extracellular-facing. Residues Ile-1064 to Leu-1082 form a helical membrane-spanning segment. The Cytoplasmic portion of the chain corresponds to Lys-1083–Ala-1096. The helical transmembrane segment at Trp-1097–Asn-1115 threads the bilayer. The Extracellular portion of the chain corresponds to Trp-1116 to Gly-1123. Residues Pro-1124 to Arg-1142 form a helical membrane-spanning segment. The Cytoplasmic segment spans residues Phe-1143–Ser-1159. Residues Ile-1160–Val-1179 form a helical membrane-spanning segment. Residues Asn-1180–Val-1230 are Extracellular-facing. A disulfide bridge connects residues Cys-1189 and Cys-1209. 2 N-linked (GlcNAc...) asparagine glycosylation sites follow: Asn-1191 and Asn-1205. Residues Gly-1231–Ala-1252 constitute an intramembrane region (pore-forming). Residues Ala-1253–Leu-1269 are Extracellular-facing. A helical membrane pass occupies residues Tyr-1270–Ile-1291. At Gly-1292 to Ala-1354 the chain is on the cytoplasmic side. Positions Ile-1310 to Met-1312 are important for rapid channel inactivation. The stretch at Ile-1335–Gln-1633 is one IV repeat. Residues Phe-1355–Val-1372 traverse the membrane as a helical segment. Over Glu-1373–Asp-1383 the chain is Extracellular. Residues Ile-1384–Leu-1402 traverse the membrane as a helical segment. Over Lys-1403–Val-1414 the chain is Cytoplasmic. Residues Gly-1415 to Ala-1432 traverse the membrane as a helical segment. Residues Leu-1433–Thr-1445 are Extracellular-facing. Residues Leu-1446–Ile-1462 form a helical membrane-spanning segment. Residues Arg-1463–Ala-1481 lie on the Cytoplasmic side of the membrane. A helical membrane pass occupies residues Leu-1482–Phe-1499. Topologically, residues Gly-1500–Thr-1521 are extracellular. The segment at residues Phe-1522–Pro-1544 is an intramembrane region (pore-forming). Over Ile-1545–Gly-1574 the chain is Extracellular. Cysteines 1553 and 1568 form a disulfide. A helical transmembrane segment spans residues Ile-1575–Ile-1597. The Cytoplasmic portion of the chain corresponds to Leu-1598–Val-1836. Residues Glu-1727–His-1756 form the IQ domain. Positions Lys-1778–Val-1836 are disordered.

The protein belongs to the sodium channel (TC 1.A.1.10) family. Nav1.4/SCN4A subfamily. As to quaternary structure, the Nav1.4 voltage-gated sodium channel consists of an ion-conducting alpha subunit SCN4A which is functional on its own and a regulatory beta subunit SCN1B. SCN1B strongly enhances the presence of SCN4A at the cell surface. SCN1B is also required for rapid channel inactivation and recovery after inactivation. It prevents the decrease of channel activity in response to repetitive, high-frequency depolarizations. Interacts with the syntrophins SNTA1, SNTB1 and SNTB2 (via PDZ domain); probably links SCN4A to the actin cytoskeleton and the extracellular matrix via the dystrophin-associated protein complex and regulates its localization in muscle cells. Interacts with TMEM233; probable regulator of the channel.

The protein localises to the cell membrane. It catalyses the reaction Na(+)(in) = Na(+)(out). The channel is inhibited by tetrodotoxin and saxitoxin. Inhibited by the conotoxin GVIIJ. In terms of biological role, pore-forming subunit of Nav1.4, a voltage-gated sodium (Nav) channel that directly mediates the depolarizing phase of action potentials in excitable membranes. Navs, also called VGSCs (voltage-gated sodium channels) or VDSCs (voltage-dependent sodium channels), operate by switching between closed and open conformations depending on the voltage difference across the membrane. In the open conformation they allow Na(+) ions to selectively pass through the pore, along their electrochemical gradient. The influx of Na+ ions provokes membrane depolarization, initiating the propagation of electrical signals throughout cells and tissues. Highly expressed in skeletal muscles, Nav1.4 generates the action potential crucial for muscle contraction. The protein is Sodium channel protein type 4 subunit alpha of Homo sapiens (Human).